The following is a 342-amino-acid chain: Phosphate acyltransferase (342 aa).

The protein belongs to the PlsX family. Homodimer. Probably interacts with PlsY.

The protein resides in the cytoplasm. The enzyme catalyses a fatty acyl-[ACP] + phosphate = an acyl phosphate + holo-[ACP]. Its pathway is lipid metabolism; phospholipid metabolism. Functionally, catalyzes the reversible formation of acyl-phosphate (acyl-PO(4)) from acyl-[acyl-carrier-protein] (acyl-ACP). This enzyme utilizes acyl-ACP as fatty acyl donor, but not acyl-CoA. The polypeptide is Phosphate acyltransferase (Trichormus variabilis (strain ATCC 29413 / PCC 7937) (Anabaena variabilis)).